A 564-amino-acid polypeptide reads, in one-letter code: Acetylcholine receptor subunit alpha-type deg-3 (564 aa).

An N-terminal signal peptide occupies residues 1–20 (MTLKIRTIIILFCVISVTTT). Topologically, residues 21 to 268 (SQSLNATLKT…SLVIQRKPLY (248 aa)) are extracellular. N-linked (GlcNAc...) asparagine glycans are attached at residues Asn-25, Asn-37, Asn-125, and Asn-198. Intrachain disulfides connect Cys-185-Cys-199 and Cys-248-Cys-249. 3 helical membrane passes run 269–289 (YLVN…TGFF), 302–319 (INLG…MLMV), and 329–353 (FVPL…LTSV). Residues 354–526 (VLSVQGRRQY…WEFLATVLDR (173 aa)) lie on the Cytoplasmic side of the membrane. Residues 527–547 (FLLIVFVGAVVIVTAGLILVG) traverse the membrane as a helical segment.

It belongs to the ligand-gated ion channel (TC 1.A.9) family. Acetylcholine receptor (TC 1.A.9.1) subfamily. As to quaternary structure, the functional receptor is a heteromer of deg-3 and des-2. Interacts with ric-3; which is required for proper receptor folding.

Its subcellular location is the postsynaptic cell membrane. It localises to the cell membrane. Subunit of the non-synaptic neuronal acetylcholine receptor, which may play a role in chemotaxis towards choline. After binding choline or acetylcholine, the AChR responds by an extensive change in conformation that affects all subunits and leads to opening of an ion-conducting channel across the plasma membrane. This Caenorhabditis elegans protein is Acetylcholine receptor subunit alpha-type deg-3 (deg-3).